We begin with the raw amino-acid sequence, 507 residues long: Dolichyl pyrophosphate Man9GlcNAc2 alpha-1,3-glucosyltransferase (507 aa).

The Cytoplasmic segment spans residues 1–2; the sequence is ME. The helical transmembrane segment at 3 to 23 threads the bilayer; that stretch reads SWPWMAVVVLLGLTVRWTVSL. Topologically, residues 24–114 are lumenal; the sequence is SSYSGAGKPP…SQAHKLFMRA (91 aa). N-linked (GlcNAc...) asparagine glycosylation is present at Asn-59. A helical membrane pass occupies residues 115 to 135; it reads TVLAADLLIYVPAVLLYCYSL. Residues 136–143 are Cytoplasmic-facing; sequence KEISPKRK. A helical transmembrane segment spans residues 144-164; that stretch reads IASALCILLYPGLILIDYGHF. At 165–172 the chain is on the lumenal side; that stretch reads QYNSVSLG. The helical transmembrane segment at 173–193 threads the bilayer; sequence FALWGVLGVSWDWDLLGSLAF. Residues 194-229 lie on the Cytoplasmic side of the membrane; it reads CLALNYKQMELYHSLPFFCFLLGKCFKKGLKGKGLA. A helical transmembrane segment spans residues 230 to 250; that stretch reads LFIRIACTVLASFLLCWLPFL. The Lumenal portion of the chain corresponds to 251 to 297; the sequence is TEREHALQVVRRLFPVDRGLFEDKVANIWCSVNVFLKIKDTLPRHIQ. The chain crosses the membrane as a helical span at residues 298–318; sequence IAISFCFTLLSLLPACIKLTV. Residues 319-332 are Cytoplasmic-facing; it reads RPSCKGFRFTLVSC. Residues 333-353 traverse the membrane as a helical segment; that stretch reads ALSFFLFSFQVHEKSILLVSL. Topologically, residues 354–361 are lumenal; sequence PVCLVLTE. Residues 362-382 traverse the membrane as a helical segment; it reads IPFMSTWFLLVSTFSMLPLLL. Over 383–385 the chain is Cytoplasmic; that stretch reads KDE. The helical transmembrane segment at 386-406 threads the bilayer; sequence LLLPSVVTVMAFVIACGTFFP. Residues 407 to 437 lie on the Lumenal side of the membrane; that stretch reads MLENTSEEQLQLKSFAVSVRRHLPGFTFLPR. A helical membrane pass occupies residues 438–458; it reads IMQCLFLSSVITMVLLTILSV. Residues 459 to 468 are Cytoplasmic-facing; sequence TLDPPQKLPD. The helical transmembrane segment at 469–489 threads the bilayer; the sequence is LFPVLICFVSCVNFVFFLVYF. The Lumenal portion of the chain corresponds to 490 to 507; it reads NIVIMWDSKNGRNRKKIE.

This sequence belongs to the ALG6/ALG8 glucosyltransferase family.

It is found in the endoplasmic reticulum membrane. It carries out the reaction an alpha-D-Man-(1-&gt;2)-alpha-D-Man-(1-&gt;2)-alpha-D-Man-(1-&gt;3)-[alpha-D-Man-(1-&gt;2)-alpha-D-Man-(1-&gt;3)-[alpha-D-Man-(1-&gt;2)-alpha-D-Man-(1-&gt;6)]-alpha-D-Man-(1-&gt;6)]-beta-D-Man-(1-&gt;4)-beta-D-GlcNAc-(1-&gt;4)-alpha-D-GlcNAc-diphospho-di-trans,poly-cis-dolichol + a di-trans,poly-cis-dolichyl beta-D-glucosyl phosphate = an alpha-D-Glc-(1-&gt;3)-alpha-D-Man-(1-&gt;2)-alpha-D-Man-(1-&gt;2)-alpha-D-Man-(1-&gt;3)-[alpha-D-Man-(1-&gt;2)-alpha-D-Man-(1-&gt;3)-[alpha-D-Man-(1-&gt;2)-alpha-D-Man-(1-&gt;6)]-alpha-D-Man-(1-&gt;6)]-beta-D-Man-(1-&gt;4)-beta-D-GlcNAc-(1-&gt;4)-alpha-D-GlcNAc-diphospho-di-trans,poly-cis-dolichol + a di-trans,poly-cis-dolichyl phosphate + H(+). It functions in the pathway protein modification; protein glycosylation. Functionally, dolichyl pyrophosphate Man9GlcNAc2 alpha-1,3-glucosyltransferase that operates in the biosynthetic pathway of dolichol-linked oligosaccharides, the glycan precursors employed in protein asparagine (N)-glycosylation. The assembly of dolichol-linked oligosaccharides begins on the cytosolic side of the endoplasmic reticulum membrane and finishes in its lumen. The sequential addition of sugars to dolichol pyrophosphate produces dolichol-linked oligosaccharides containing fourteen sugars, including two GlcNAcs, nine mannoses and three glucoses. Once assembled, the oligosaccharide is transferred from the lipid to nascent proteins by oligosaccharyltransferases. In the lumen of the endoplasmic reticulum, adds the first glucose residue from dolichyl phosphate glucose (Dol-P-Glc) onto the lipid-linked oligosaccharide intermediate Man(9)GlcNAc(2)-PP-Dol to produce Glc(1)Man(9)GlcNAc(2)-PP-Dol. Glc(1)Man(9)GlcNAc(2)-PP-Dol is a substrate for ALG8, the following enzyme in the biosynthetic pathway. In Mus musculus (Mouse), this protein is Dolichyl pyrophosphate Man9GlcNAc2 alpha-1,3-glucosyltransferase.